Consider the following 1711-residue polypeptide: Protein chiffon (1711 aa).

Disordered regions lie at residues 1 to 31 (MQPQ…AATP), 87 to 129 (KPEV…SRAD), and 244 to 307 (TKSK…IDSS). The sufficient for interaction with and activation of Cdc7 stretch occupies residues 1 to 400 (MQPQSDKQSA…PALREKSKRI (400 aa)). Low complexity-rich tracts occupy residues 10-30 (ASRL…TAAT) and 97-109 (TPGT…TPTS). Residues S306 and S307 each carry the phosphoserine modification. The segment at 307–356 (SEKQGGVCEICKLEYDILNIHLQSKDHELFAKNSDNFLALDTLIQSSADV) adopts a DBF4-type zinc-finger fold. Residues C314, C317, H327, and H333 each coordinate Zn(2+). Positions 365-378 (VESELDMDVDESLS) are enriched in acidic residues. Disordered stretches follow at residues 365-507 (VESE…DSPS), 531-647 (MFPR…KPQL), 733-771 (LDEE…REQR), 791-817 (TEVK…KVKQ), 908-945 (QDKG…YKNK), 1005-1025 (RSTS…CRNK), 1055-1157 (QRQD…RNQS), 1271-1290 (ESEG…PPTD), 1303-1329 (MGSA…RMSN), 1343-1370 (LKSN…ALPD), and 1383-1644 (LHPI…SKYA). Phosphoserine occurs at positions 406, 407, 417, 432, and 435. The segment covering 429–439 (QGNSPGSLSEL) has biased composition (polar residues). Residues 445-454 (PTTAAATPTT) show a composition bias toward low complexity. S467 is modified (phosphoserine). Positions 493-505 (PRGRGRPPNQVDS) form a DNA-binding region, a.T hook. Polar residues predominate over residues 537 to 546 (VPTTRSSSEL). Residues S542, S543, and S544 each carry the phosphoserine modification. Positions 549–560 (DVDRQTTSDVRG) are enriched in basic and acidic residues. Low complexity predominate over residues 563-575 (SISSASLDTSTSE). Over residues 588-601 (IRKRAQAVGRRRKV) the composition is skewed to basic residues. The span at 793–812 (VKTSPSKSRTKIQKPSSPTK) shows a compositional bias: polar residues. The span at 908 to 932 (QDKGEQIKLEDQKPAPKKEVKKEEE) shows a compositional bias: basic and acidic residues. A compositionally biased stretch (low complexity) spans 1006–1018 (STSSSSCSNSQRS). Position 1081 is a phosphothreonine (T1081). Phosphoserine is present on residues S1091 and S1092. The segment covering 1092–1101 (SPRTTRSQAA) has biased composition (polar residues). Residues 1398–1407 (TTTTTTTTTT) show a composition bias toward low complexity. The segment at 1400–1695 (TTTTTTTTSA…NAWRRTQRRA (296 aa)) is sufficient for interaction with Gcn5. Residues 1435 to 1445 (ADDKQNSREDA) are compositionally biased toward basic and acidic residues. 2 stretches are compositionally biased toward acidic residues: residues 1453 to 1475 (DVDE…DETM) and 1483 to 1518 (QDVE…EEQD). Polar residues-rich tracts occupy residues 1536-1545 (ISVTTPPEDS) and 1556-1591 (HNGQ…SCIS).

As to quaternary structure, component of the Dbf4-dependent kinase (DDK) complex consisting of Cdc7 and the Dbf4 ortholog chif. Interacts with Cdc7; the interaction is direct. Interacts with CG5790. In terms of assembly, component of the Chiffon histone acetyltransferase (CHAT) complex consisting of Ada3, Sgf29, Gcn5, chif/chiffon and Ada2b (Isoform A). Interacts (via C-terminus) with Gcn5; the interaction is direct but weak in the absence of other CHAT components. Post-translationally, may be proteolytically cleaved to produce a N-terminal 50 kDa product.

The protein resides in the nucleus. In terms of biological role, a bicistronic gene producing two proteins that are components of different complexes and have separate properties and functions. Full-length protein is proteolytically cleaved, producing a ~50kDa N-terminal product (Chiffon-A) that forms part of the DDK complex; it is unclear if the C-terminal proteolytic product is stable or functional. Alternative initiation from an internal ribosome entry site produces a C-terminal ~48kDa product (Chiffon-B or Isoform E) that forms part of the CHAT complex. Involved in regulation of gene expression during embryonic development. Regulatory component of the Dbf4-dependent kinase (DDK) complex. Required for the amplification stage, but not the preceding endoreplication stage of DNA replication in egg chamber follicle cells of the ovary. May be involved in initiation of DNA replication; activation of the chorion gene origins. May have a role in eye and thoracic bristle development. Required for female fertility; is not required for oogenesis but is required maternally for early embryo development. Its function is as follows. Component of the CHAT histone acetyltransferase complex, which predominantly acetylates histone H3. As part of the CHAT complex involved in acetylation of histone H3 on 'Lys-10' (H3K9ac), 'Lys-15' (H3K14ac) and 'Lys-19' (H3K18ac), but not 'Lys-25' (H3K24ac). May also regulate other histone acetyltransferase complexes. Essential for viability. Not required for early stages of embryonic development. May be involved in zygotic genome activation during embryogenesis. The polypeptide is Protein chiffon (Drosophila melanogaster (Fruit fly)).